The sequence spans 514 residues: Maturase K (514 aa).

Belongs to the intron maturase 2 family. MatK subfamily.

It is found in the plastid. The protein localises to the chloroplast. Usually encoded in the trnK tRNA gene intron. Probably assists in splicing its own and other chloroplast group II introns. This chain is Maturase K, found in Acer monspessulanum (Montpellier maple).